Consider the following 142-residue polypeptide: Large ribosomal subunit protein uL11 (142 aa).

It belongs to the universal ribosomal protein uL11 family. In terms of assembly, part of the ribosomal stalk of the 50S ribosomal subunit. Interacts with L10 and the large rRNA to form the base of the stalk. L10 forms an elongated spine to which L12 dimers bind in a sequential fashion forming a multimeric L10(L12)X complex. In terms of processing, one or more lysine residues are methylated.

Its function is as follows. Forms part of the ribosomal stalk which helps the ribosome interact with GTP-bound translation factors. The polypeptide is Large ribosomal subunit protein uL11 (Pectobacterium carotovorum subsp. carotovorum (strain PC1)).